The chain runs to 269 residues: 5'-nucleotidase SurE (269 aa).

A divalent metal cation-binding residues include aspartate 11, aspartate 12, serine 43, and asparagine 101.

The protein belongs to the SurE nucleotidase family. It depends on a divalent metal cation as a cofactor.

It is found in the cytoplasm. The enzyme catalyses a ribonucleoside 5'-phosphate + H2O = a ribonucleoside + phosphate. Nucleotidase that shows phosphatase activity on nucleoside 5'-monophosphates. This is 5'-nucleotidase SurE from Synechococcus sp. (strain WH7803).